Consider the following 369-residue polypeptide: UDP-glucose 4-epimerase 4 (369 aa).

NAD(+) is bound at residue 19 to 50 (TVLVTGGAGYIGSHTVLQLLAAGFRVVVADSL). Ser-144 is a substrate binding site. The active-site Proton acceptor is Tyr-168.

The protein belongs to the NAD(P)-dependent epimerase/dehydratase family. NAD(+) is required as a cofactor.

The catalysed reaction is UDP-alpha-D-glucose = UDP-alpha-D-galactose. The protein operates within carbohydrate metabolism; galactose metabolism. Catalyzes the interconversion between UDP-glucose and UDP-galactose. This is UDP-glucose 4-epimerase 4 (UGE-4) from Oryza sativa subsp. japonica (Rice).